The chain runs to 300 residues: Ribosomal RNA small subunit methyltransferase H (300 aa).

S-adenosyl-L-methionine is bound by residues 33 to 35, Asp52, Phe79, Asp100, and Gln107; that span reads GGH.

This sequence belongs to the methyltransferase superfamily. RsmH family.

Its subcellular location is the cytoplasm. It carries out the reaction cytidine(1402) in 16S rRNA + S-adenosyl-L-methionine = N(4)-methylcytidine(1402) in 16S rRNA + S-adenosyl-L-homocysteine + H(+). Functionally, specifically methylates the N4 position of cytidine in position 1402 (C1402) of 16S rRNA. The chain is Ribosomal RNA small subunit methyltransferase H from Mycoplasmopsis agalactiae (strain NCTC 10123 / CIP 59.7 / PG2) (Mycoplasma agalactiae).